The sequence spans 941 residues: Bifunctional glutamine synthetase adenylyltransferase/adenylyl-removing enzyme (941 aa).

The interval 1–437 is adenylyl removase; that stretch reads MPMPTVSMSP…AAEFAELLAP (437 aa). The tract at residues 444–941 is adenylyl transferase; sequence PDALADYWRA…FPLGKDETAL (498 aa).

Belongs to the GlnE family. Mg(2+) is required as a cofactor.

The catalysed reaction is [glutamine synthetase]-O(4)-(5'-adenylyl)-L-tyrosine + phosphate = [glutamine synthetase]-L-tyrosine + ADP. It catalyses the reaction [glutamine synthetase]-L-tyrosine + ATP = [glutamine synthetase]-O(4)-(5'-adenylyl)-L-tyrosine + diphosphate. In terms of biological role, involved in the regulation of glutamine synthetase GlnA, a key enzyme in the process to assimilate ammonia. When cellular nitrogen levels are high, the C-terminal adenylyl transferase (AT) inactivates GlnA by covalent transfer of an adenylyl group from ATP to specific tyrosine residue of GlnA, thus reducing its activity. Conversely, when nitrogen levels are low, the N-terminal adenylyl removase (AR) activates GlnA by removing the adenylyl group by phosphorolysis, increasing its activity. The regulatory region of GlnE binds the signal transduction protein PII (GlnB) which indicates the nitrogen status of the cell. The polypeptide is Bifunctional glutamine synthetase adenylyltransferase/adenylyl-removing enzyme (Xanthomonas axonopodis pv. citri (strain 306)).